We begin with the raw amino-acid sequence, 546 residues long: (-)-5-epieremophilene synthase STPS1 (546 aa).

5 residues coordinate Mg(2+): aspartate 299, aspartate 303, aspartate 442, threonine 446, and glutamate 450. A DDXXD motif motif is present at residues 299-303; that stretch reads DDTYD.

It belongs to the terpene synthase family. Tpsa subfamily. Monomer. Requires Mg(2+) as cofactor. In terms of tissue distribution, highly expressed in leaves and at lower levels in flowers.

It carries out the reaction (2E,6E)-farnesyl diphosphate = (-)-5-epi-eremophilene + diphosphate. It participates in secondary metabolite biosynthesis; terpenoid biosynthesis. In terms of biological role, sesquiterpene synthase that catalyzes the conversion of farnesyl diphosphate to (-)-5-epi-eremophilene. This is (-)-5-epieremophilene synthase STPS1 from Salvia miltiorrhiza (Chinese sage).